A 746-amino-acid chain; its full sequence is Exostosin-1 (746 aa).

The Cytoplasmic segment spans residues methionine 1 to lysine 5. Residues arginine 6–valine 26 traverse the membrane as a helical; Signal-anchor for type II membrane protein segment. Topologically, residues glutamine 27–leucine 746 are lumenal. An N-linked (GlcNAc...) asparagine glycan is attached at asparagine 89. Cystine bridges form between cysteine 98-cysteine 103 and cysteine 109-cysteine 152. A protein-binding residues include leucine 166 and tyrosine 203. The UDP site is built by lysine 267, lysine 269, tyrosine 271, and arginine 280. Cysteine 298 and cysteine 312 form a disulfide bridge. Position 300 (histidine 300) interacts with a protein. UDP is bound by residues tyrosine 319 and tyrosine 324. N-linked (GlcNAc...) asparagine glycosylation is present at asparagine 330. 2 cysteine pairs are disulfide-bonded: cysteine 334–cysteine 355 and cysteine 652–cysteine 704. UDP is bound by residues arginine 346 and glutamate 349.

This sequence belongs to the glycosyltransferase 47 family. As to quaternary structure, part of the heparan sulfate polymerase, a dimeric complex composed of EXT1 and EXT2. Could also form homooligomeric complexes. Interacts with NDST1. In terms of processing, N-glycosylated.

The protein resides in the golgi apparatus membrane. It is found in the golgi apparatus. The protein localises to the cis-Golgi network membrane. It localises to the endoplasmic reticulum membrane. The enzyme catalyses 3-O-{alpha-D-GlcNAc-[(1-&gt;4)-beta-D-GlcA-(1-&gt;4)-alpha-D-GlcNAc](n)-(1-&gt;4)-beta-D-GlcA-(1-&gt;3)-beta-D-Gal-(1-&gt;3)-beta-D-Gal-(1-&gt;4)-beta-D-Xyl}-L-seryl-[protein] + UDP-alpha-D-glucuronate = 3-O-{[(1-&gt;4)-beta-D-GlcA-(1-&gt;4)-alpha-D-GlcNAc](n+1)-(1-&gt;4)-beta-D-GlcA-(1-&gt;3)-beta-D-Gal-(1-&gt;3)-beta-D-Gal-(1-&gt;4)-beta-D-Xyl}-L-seryl-[protein] + UDP + H(+). The protein operates within protein modification; protein glycosylation. Its function is as follows. Glycosyltransferase forming with EXT2 the heterodimeric heparan sulfate polymerase which catalyzes the elongation of the heparan sulfate glycan backbone. Glycan backbone extension consists in the alternating transfer of (1-&gt;4)-beta-D-GlcA and (1-&gt;4)-alpha-D-GlcNAc residues from their respective UDP-sugar donors. Both EXT1 and EXT2 are required for the full activity of the polymerase since EXT1 bears the N-acetylglucosaminyl-proteoglycan 4-beta-glucuronosyltransferase activity within the complex while EXT2 carries the glucuronosyl-N-acetylglucosaminyl-proteoglycan 4-alpha-N-acetylglucosaminyltransferase activity. Heparan sulfate proteoglycans are ubiquitous components of the extracellular matrix and play an important role in tissue homeostasis and signaling. This Cricetulus griseus (Chinese hamster) protein is Exostosin-1.